We begin with the raw amino-acid sequence, 186 residues long: Ribonuclease HII (186 aa).

Positions 2–186 (KILAGVDEVG…KTFSPISDLL (185 aa)) constitute an RNase H type-2 domain. A divalent metal cation is bound by residues aspartate 8, glutamate 9, and aspartate 99.

It belongs to the RNase HII family. Mn(2+) serves as cofactor. Requires Mg(2+) as cofactor.

The protein localises to the cytoplasm. The enzyme catalyses Endonucleolytic cleavage to 5'-phosphomonoester.. Endonuclease that specifically degrades the RNA of RNA-DNA hybrids. The chain is Ribonuclease HII from Pelagibacter ubique (strain HTCC1062).